The following is an 85-amino-acid chain: Small ribosomal subunit protein bS16 (85 aa).

This sequence belongs to the bacterial ribosomal protein bS16 family.

This chain is Small ribosomal subunit protein bS16, found in Pseudomonas savastanoi pv. phaseolicola (strain 1448A / Race 6) (Pseudomonas syringae pv. phaseolicola (strain 1448A / Race 6)).